We begin with the raw amino-acid sequence, 39 residues long: Pro-opiomelanocortin (39 aa).

An N-acetylserine modification is found at Ser-1. Residue Val-13 is modified to Valine amide. The residue at position 31 (Ser-31) is a Phosphoserine.

The protein belongs to the POMC family. Expressed in the pituitary gland.

Its subcellular location is the secreted. Precursor protein for pituitary hormones that regulate stress and environmental adaptation. Its function is as follows. Stimulates the adrenal glands to release cortisol. Functionally, anorexigenic peptide. Increases the pigmentation of skin by increasing melanin production in melanocytes. The polypeptide is Pro-opiomelanocortin (POMC) (Oryctolagus cuniculus (Rabbit)).